The chain runs to 224 residues: F420-dependent NADP reductase (224 aa).

NADP(+) contacts are provided by residues 9–12, 31–32, K36, V74, V100, and A145; these read TGDQ and SR.

Belongs to the F420-dependent NADP reductase family. As to quaternary structure, homotetramer.

The catalysed reaction is reduced coenzyme F420-(gamma-L-Glu)(n) + NADP(+) = oxidized coenzyme F420-(gamma-L-Glu)(n) + NADPH + 2 H(+). Catalyzes the reduction of NADP(+) with F420H(2) via hydride transfer, and the reverse reaction, i.e. the reduction of F420 with NADPH. Probably functions in the regeneration of NADPH required in biosynthetic reactions. The protein is F420-dependent NADP reductase of Methanothermobacter marburgensis (strain ATCC BAA-927 / DSM 2133 / JCM 14651 / NBRC 100331 / OCM 82 / Marburg) (Methanobacterium thermoautotrophicum).